We begin with the raw amino-acid sequence, 322 residues long: Uridylate-specific endoribonuclease EndoU (322 aa).

The helical transmembrane segment at 25-45 threads the bilayer; that stretch reads FVIVGLLITIGILSWHFYEYF. Residues 53–322 form the EndoU domain; that stretch reads TPDDVLTLSK…LIGTVYPDSS (270 aa). Catalysis depends on residues His200, His215, and Lys259.

The protein belongs to the ENDOU family. Monomer. The cofactor is Mn(2+). In terms of tissue distribution, predominantly expressed in head.

Its subcellular location is the membrane. It catalyses the reaction a ribonucleotidyl-ribonucleotide-RNA = a 3'-end 2',3'-cyclophospho-ribonucleotide-RNA + a 5'-end dephospho-ribonucleoside-RNA. In terms of biological role, endoribonuclease that cleaves single-stranded RNAs at uridylates and releases products that have 2'-3'-cyclic phosphate termini. Preferentially cleaves single stranded RNA at poly-U sites with CU, UC and AU sites cleaved less efficiently. May target mRNAs encoding proteins involved in lipid metabolism to regulate their expression. Regulates levels of TBPH protein, but not mRNA, by an as yet unknown mechanism. Important for neuronal development or function. The chain is Uridylate-specific endoribonuclease EndoU from Drosophila melanogaster (Fruit fly).